We begin with the raw amino-acid sequence, 675 residues long: tRNA 5-methylaminomethyl-2-thiouridine biosynthesis bifunctional protein MnmC (675 aa).

Positions Met1–Pro245 are tRNA (mnm(5)s(2)U34)-methyltransferase. Residues Ile271–Asp675 are FAD-dependent cmnm(5)s(2)U34 oxidoreductase.

The protein in the N-terminal section; belongs to the methyltransferase superfamily. tRNA (mnm(5)s(2)U34)-methyltransferase family. It in the C-terminal section; belongs to the DAO family. FAD serves as cofactor.

Its subcellular location is the cytoplasm. The enzyme catalyses 5-aminomethyl-2-thiouridine(34) in tRNA + S-adenosyl-L-methionine = 5-methylaminomethyl-2-thiouridine(34) in tRNA + S-adenosyl-L-homocysteine + H(+). Functionally, catalyzes the last two steps in the biosynthesis of 5-methylaminomethyl-2-thiouridine (mnm(5)s(2)U) at the wobble position (U34) in tRNA. Catalyzes the FAD-dependent demodification of cmnm(5)s(2)U34 to nm(5)s(2)U34, followed by the transfer of a methyl group from S-adenosyl-L-methionine to nm(5)s(2)U34, to form mnm(5)s(2)U34. This chain is tRNA 5-methylaminomethyl-2-thiouridine biosynthesis bifunctional protein MnmC, found in Pectobacterium atrosepticum (strain SCRI 1043 / ATCC BAA-672) (Erwinia carotovora subsp. atroseptica).